Consider the following 283-residue polypeptide: ATP phosphoribosyltransferase (283 aa).

This sequence belongs to the ATP phosphoribosyltransferase family. Long subfamily. Mg(2+) is required as a cofactor.

The protein localises to the cytoplasm. The enzyme catalyses 1-(5-phospho-beta-D-ribosyl)-ATP + diphosphate = 5-phospho-alpha-D-ribose 1-diphosphate + ATP. Its pathway is amino-acid biosynthesis; L-histidine biosynthesis; L-histidine from 5-phospho-alpha-D-ribose 1-diphosphate: step 1/9. Its activity is regulated as follows. Feedback inhibited by histidine. Catalyzes the condensation of ATP and 5-phosphoribose 1-diphosphate to form N'-(5'-phosphoribosyl)-ATP (PR-ATP). Has a crucial role in the pathway because the rate of histidine biosynthesis seems to be controlled primarily by regulation of HisG enzymatic activity. This is ATP phosphoribosyltransferase from Rhodococcus opacus (strain B4).